Here is a 98-residue protein sequence, read N- to C-terminus: Integration host factor subunit alpha (98 aa).

This sequence belongs to the bacterial histone-like protein family. As to quaternary structure, heterodimer of an alpha and a beta chain.

In terms of biological role, this protein is one of the two subunits of integration host factor, a specific DNA-binding protein that functions in genetic recombination as well as in transcriptional and translational control. The polypeptide is Integration host factor subunit alpha (Glaesserella parasuis serovar 5 (strain SH0165) (Haemophilus parasuis)).